A 1308-amino-acid polypeptide reads, in one-letter code: Cilia- and flagella-associated protein 57 C (1308 aa).

7 WD repeats span residues 57–99, 110–154, 415–454, 504–546, 551–590, 645–689, and 694–733; these read NEYR…RRKN, YNIK…KCLG, NHTG…IKIS, SPFK…NPSQ, GHTG…QHQQ, LLDI…GKFT, and HDER…ARGM. Residues 779–1000 are a coiled coil; sequence LNSRDDRIRQ…RDKIDGQKKI (222 aa).

The protein belongs to the CFAP57 family. Forms a heterodimer with CFAP57A. Associates with components of the nexin-dynein regulatory complex (N-DRC) and the CFAP184:CFAP263 complex.

It localises to the cell projection. Its subcellular location is the cilium. Functionally, associates with components of the nexin-dynein regulatory complex (N-DRC), a key regulator of ciliary/flagellar motility, and might act as an inner dynein arm (IDA) hub or linkage. The chain is Cilia- and flagella-associated protein 57 C (CFAP57C) from Tetrahymena thermophila (strain SB210).